The following is a 114-amino-acid chain: Fluoride-specific ion channel FluC 2 (114 aa).

The next 4 helical transmembrane spans lie at 3-23 (YVII…ECWL), 31-51 (LMTA…WILA), 57-77 (GIEL…TFCM), and 92-112 (MIYL…GWNV). Na(+) is bound by residues Gly-67 and Thr-70.

This sequence belongs to the fluoride channel Fluc/FEX (TC 1.A.43) family.

It is found in the cell membrane. It carries out the reaction fluoride(in) = fluoride(out). Its activity is regulated as follows. Na(+) is not transported, but it plays an essential structural role and its presence is essential for fluoride channel function. In terms of biological role, fluoride-specific ion channel. Important for reducing fluoride concentration in the cell, thus reducing its toxicity. This is Fluoride-specific ion channel FluC 2 from Shouchella clausii (strain KSM-K16) (Alkalihalobacillus clausii).